We begin with the raw amino-acid sequence, 147 residues long: VELTEAQRGAIVNLWGHLSPDEIGPQALARLLIVYPWTQRYFASFGNISSAAAIMGNPKVAAHGKVVVGALDKAVKNLNNIKGTYAALSTIHSEKLHVDPDNFRLLAESFTVSVAMKLGPSGFNAETQHALAKFLAEVVSALGKQYH.

The 146-residue stretch at 2–147 (ELTEAQRGAI…VVSALGKQYH (146 aa)) folds into the Globin domain. Heme b contacts are provided by His-63 and His-92.

This sequence belongs to the globin family. In terms of assembly, heterotetramer of two alpha chains and two beta chains. Red blood cells.

Involved in oxygen transport from gills to the various peripheral tissues. In Electrophorus electricus (Electric eel), this protein is Hemoglobin subunit beta (hbb).